The following is a 301-amino-acid chain: UDP-N-acetylenolpyruvoylglucosamine reductase (301 aa).

The region spanning Val-30 to Gly-194 is the FAD-binding PCMH-type domain. Arg-173 is a catalytic residue. The active-site Proton donor is Ser-223. Glu-293 is a catalytic residue.

This sequence belongs to the MurB family. FAD serves as cofactor.

It localises to the cytoplasm. The enzyme catalyses UDP-N-acetyl-alpha-D-muramate + NADP(+) = UDP-N-acetyl-3-O-(1-carboxyvinyl)-alpha-D-glucosamine + NADPH + H(+). The protein operates within cell wall biogenesis; peptidoglycan biosynthesis. Cell wall formation. The sequence is that of UDP-N-acetylenolpyruvoylglucosamine reductase from Streptococcus pneumoniae (strain 70585).